A 480-amino-acid polypeptide reads, in one-letter code: UDP-N-acetylmuramate--L-alanine ligase (480 aa).

129-135 (GSHGKTT) provides a ligand contact to ATP.

This sequence belongs to the MurCDEF family.

The protein resides in the cytoplasm. It carries out the reaction UDP-N-acetyl-alpha-D-muramate + L-alanine + ATP = UDP-N-acetyl-alpha-D-muramoyl-L-alanine + ADP + phosphate + H(+). It participates in cell wall biogenesis; peptidoglycan biosynthesis. Cell wall formation. This Syntrophus aciditrophicus (strain SB) protein is UDP-N-acetylmuramate--L-alanine ligase.